The sequence spans 486 residues: Histamine H1 receptor (486 aa).

Residues 1–29 (MSFANTSSTFEDKMCEGNRTAMASPQLLP) are Extracellular-facing. N-linked (GlcNAc...) asparagine glycosylation is found at Asn-5 and Asn-18. Residues 30–50 (LVVVLSSISLVTVGLNLLVLY) traverse the membrane as a helical segment. Residues 51–64 (AVHSERKLHTVGNL) are Cytoplasmic-facing. Residues 65–89 (YIVSLSVADLIVGAVVMPMNILYLI) traverse the membrane as a helical segment. Residues 90-97 (MTKWSLGR) lie on the Extracellular side of the membrane. Residues 98 to 123 (PLCLFWLSMDYVASTASIFSVFILCI) form a helical membrane-spanning segment. Residues Cys-100 and Cys-180 are joined by a disulfide bond. Histamine is bound by residues Asp-107 and Thr-112. An important for agonist binding region spans residues 107–112 (DYVAST). At 124-144 (DRYRSVQQPLRYLRYRTKTRA) the chain is on the cytoplasmic side. Thr-140 and Thr-142 each carry phosphothreonine. The helical transmembrane segment at 145–164 (SATILGAWFFSFLWVIPILG) threads the bilayer. The Extracellular segment spans residues 165–188 (WHHFMPPAPELREDKCETDFYNVT). Residues 189-211 (WFKIMTAIINFYLPTLLMLWFYV) form a helical membrane-spanning segment. Position 198 (Asn-198) interacts with histamine. Residues 212-415 (KIYKAVRRHC…LNRERKAAKQ (204 aa)) lie on the Cytoplasmic side of the membrane. A Phosphoserine modification is found at Ser-230. The segment covering 241-253 (SDDTKEGAKKPGR) has biased composition (basic and acidic residues). Disordered stretches follow at residues 241–295 (SDDT…GERE) and 310–379 (VAEG…RSGS). A phosphoserine mark is found at Ser-342 and Ser-345. Positions 347–365 (DQTLVDQQSFSRTTDSDTS) are enriched in polar residues. Residues Ser-379, Ser-381, Ser-395, and Ser-397 each carry the phosphoserine modification. Residues 416-439 (LGFIMAAFILCWIPYFIFFMVIAF) traverse the membrane as a helical segment. The important for agonist binding stretch occupies residues 423–427 (FILCW). Tyr-430 contacts histamine. Cys-440 and Cys-443 form a disulfide bridge. Residues 440–445 (CKSCCS) lie on the Extracellular side of the membrane. A helical transmembrane segment spans residues 446-468 (EPMHMFTIWLGYINSTLNPLIYP). Topologically, residues 469–486 (LCNENFKKTFKKILHIRS) are cytoplasmic.

Belongs to the G-protein coupled receptor 1 family. In terms of processing, phosphorylation at sites in the second and third cytoplasmic loops independently contribute to agonist-induced receptor down-regulation.

The protein localises to the cell membrane. Functionally, G-protein-coupled receptor for histamine, a biogenic amine that functions as an immune modulator and a neurotransmitter. Through the H1 receptor, histamine mediates the contraction of smooth muscles and increases capillary permeability due to contraction of terminal venules. Also mediates neurotransmission in the central nervous system and thereby regulates circadian rhythms, emotional and locomotor activities as well as cognitive functions. This chain is Histamine H1 receptor, found in Rattus norvegicus (Rat).